The primary structure comprises 584 residues: Arginine--tRNA ligase (584 aa).

The 'HIGH' region signature appears at 127 to 137 (PNTNKPLHVGH).

This sequence belongs to the class-I aminoacyl-tRNA synthetase family. Monomer.

The protein resides in the cytoplasm. It carries out the reaction tRNA(Arg) + L-arginine + ATP = L-arginyl-tRNA(Arg) + AMP + diphosphate. This chain is Arginine--tRNA ligase, found in Borrelia turicatae (strain 91E135).